Consider the following 361-residue polypeptide: Salt tolerance receptor-like cytoplasmic kinase 1 (361 aa).

3 S-palmitoyl cysteine lipidation sites follow: Cys-5, Cys-10, and Cys-14. Residues 67–347 enclose the Protein kinase domain; the sequence is GFSSRVIGHG…RALQEKTSAL (281 aa). ATP is bound by residues 73-81 and Lys-95; that span reads IGHGGFSTV. The active-site Proton acceptor is the Asp-195.

The protein belongs to the protein kinase superfamily. Ser/Thr protein kinase family. In terms of assembly, self-interacts. Interacts with CATA, CATB and CATC at the plasma membrane. Post-translationally, palmitoylated. Palmotylation at Cys-5, Cys-10 and Cys-14 by DHHC9 is required for plasma membrane targeting and STRK1 function. In terms of processing, autophosphorylated. In terms of tissue distribution, accumulates in seeds. Mainly expressed in young roots, and, to a lower extent, in leaf veins, seedlings, stems, leaf sheath and young spikelet.

The protein localises to the cell membrane. The catalysed reaction is L-seryl-[protein] + ATP = O-phospho-L-seryl-[protein] + ADP + H(+). It catalyses the reaction L-threonyl-[protein] + ATP = O-phospho-L-threonyl-[protein] + ADP + H(+). The enzyme catalyses L-tyrosyl-[protein] + ATP = O-phospho-L-tyrosyl-[protein] + ADP + H(+). In terms of biological role, acts probably as a dual specificity protein kinase. Regulates hydrogen peroxide (H(2)O(2)) homeostasis and improves salt tolerance by phosphorylating tyrosine residues of CATC thus activating its catalase activity. Promotes growth at the seedling stage and prevents grain yield loss under salt stress conditions. The polypeptide is Salt tolerance receptor-like cytoplasmic kinase 1 (Oryza sativa subsp. japonica (Rice)).